Here is a 360-residue protein sequence, read N- to C-terminus: Photosystem II protein D1 1 (360 aa).

The next 3 helical transmembrane spans lie at Y29–V46, H118–L133, and W142–A156. H118 is a chlorophyll a binding site. Pheophytin a is bound at residue Y126. [CaMn4O5] cluster contacts are provided by D170 and E189. The chain crosses the membrane as a helical span at residues F197–L218. H198 contacts chlorophyll a. Residues H215 and S264–F265 contribute to the a quinone site. Position 215 (H215) interacts with Fe cation. H272 provides a ligand contact to Fe cation. Residues F274–L288 traverse the membrane as a helical segment. H332, E333, D342, and A344 together coordinate [CaMn4O5] cluster. Residues A345 to G360 constitute a propeptide that is removed on maturation.

Belongs to the reaction center PufL/M/PsbA/D family. As to quaternary structure, PSII is composed of 1 copy each of membrane proteins PsbA, PsbB, PsbC, PsbD, PsbE, PsbF, PsbH, PsbI, PsbJ, PsbK, PsbL, PsbM, PsbT, PsbX, PsbY, PsbZ, Psb30/Ycf12, peripheral proteins PsbO, CyanoQ (PsbQ), PsbU, PsbV and a large number of cofactors. It forms dimeric complexes. Requires The D1/D2 heterodimer binds P680, chlorophylls that are the primary electron donor of PSII, and subsequent electron acceptors. It shares a non-heme iron and each subunit binds pheophytin, quinone, additional chlorophylls, carotenoids and lipids. D1 provides most of the ligands for the Mn4-Ca-O5 cluster of the oxygen-evolving complex (OEC). There is also a Cl(-1) ion associated with D1 and D2, which is required for oxygen evolution. The PSII complex binds additional chlorophylls, carotenoids and specific lipids. as cofactor. Post-translationally, tyr-161 forms a radical intermediate that is referred to as redox-active TyrZ, YZ or Y-Z. In terms of processing, C-terminally processed by CtpA; processing is essential to allow assembly of the oxygen-evolving complex and thus photosynthetic growth.

The protein resides in the cellular thylakoid membrane. The enzyme catalyses 2 a plastoquinone + 4 hnu + 2 H2O = 2 a plastoquinol + O2. Functionally, photosystem II (PSII) is a light-driven water:plastoquinone oxidoreductase that uses light energy to abstract electrons from H(2)O, generating O(2) and a proton gradient subsequently used for ATP formation. It consists of a core antenna complex that captures photons, and an electron transfer chain that converts photonic excitation into a charge separation. The D1/D2 (PsbA/PsbD) reaction center heterodimer binds P680, the primary electron donor of PSII as well as several subsequent electron acceptors. The polypeptide is Photosystem II protein D1 1 (Nostoc sp. (strain PCC 7120 / SAG 25.82 / UTEX 2576)).